The following is a 602-amino-acid chain: Elongation factor 4 (602 aa).

Positions 7 to 188 (ENIRNFSIIA…SIIRLVPPPK (182 aa)) constitute a tr-type G domain. Residues 19-24 (DHGKST) and 135-138 (NKID) each bind GTP.

The protein belongs to the TRAFAC class translation factor GTPase superfamily. Classic translation factor GTPase family. LepA subfamily.

The protein resides in the cell inner membrane. It carries out the reaction GTP + H2O = GDP + phosphate + H(+). Functionally, required for accurate and efficient protein synthesis under certain stress conditions. May act as a fidelity factor of the translation reaction, by catalyzing a one-codon backward translocation of tRNAs on improperly translocated ribosomes. Back-translocation proceeds from a post-translocation (POST) complex to a pre-translocation (PRE) complex, thus giving elongation factor G a second chance to translocate the tRNAs correctly. Binds to ribosomes in a GTP-dependent manner. The polypeptide is Elongation factor 4 (Chlamydia trachomatis serovar L2 (strain ATCC VR-902B / DSM 19102 / 434/Bu)).